Reading from the N-terminus, the 132-residue chain is 3'-dehydrocarminate deglycosidase beta subunit (132 aa).

This sequence belongs to the C-glycoside deglycosidase beta subunit family. In terms of assembly, heterodimer composed of an alpha subunit (CarB) and a beta subunit (CarC). It depends on Mg(2+) as a cofactor.

It carries out the reaction 3'-dehydrocarminate + H(+) = kermesate + 1,5-anhydro-D-erythro-hex-1-en-3-ulose. Activity is strongly reduced in the presence of chelating agents. Carbon-carbon bond-cleaving enzyme which participates in a carminate degradation pathway. Cleaves the C-C bond in 3'-dehydrocarminate to form kermesate. Also shows weak activity with other C-glycosides, such as 3''-dehydropuerarin (3''-oxo-puerarin), 3''-dehydroisoorientin (3''-oxo-homoorientin) and 3'-dehydromangiferin (3'-oxo-mangiferin). The polypeptide is 3'-dehydrocarminate deglycosidase beta subunit (Microbacterium sp).